A 109-amino-acid chain; its full sequence is MNPALGNQTDVAGLFLANSSEALERAVRCCTQASVVTDDGFAEGGPDERSLYIMRVVQIAVMCVLSLTVVFGIFFLGCNLLIKSEGMINFLVKDRRPSKEVEAVVVGPY.

Residues N7 and N18 are each glycosylated (N-linked (GlcNAc...) asparagine). A helical transmembrane segment spans residues 56 to 76 (VVQIAVMCVLSLTVVFGIFFL). S98 is subject to Phosphoserine.

Belongs to the reprimo family.

It localises to the cytoplasm. The protein resides in the membrane. May be involved in the regulation of p53-dependent G2 arrest of the cell cycle. Seems to induce cell cycle arrest by inhibiting CDK1 activity and nuclear translocation of the CDC2 cyclin B1 complex. In Homo sapiens (Human), this protein is Protein reprimo (RPRM).